A 922-amino-acid polypeptide reads, in one-letter code: Metabotropic glutamate receptor 7 (922 aa).

Positions 1–34 (MVQLRKLLRVLTLMKFPCCVLEVLLCALAAAARG) are cleaved as a signal peptide. Over 35–590 (QEMYAPHSIR…IIKLEWHSPW (556 aa)) the chain is Extracellular. Residues Cys-67 and Cys-109 are joined by a disulfide bond. Asn-98 carries an N-linked (GlcNAc...) asparagine glycan. L-glutamate is bound by residues Ser-159, 180 to 182 (AST), Tyr-230, and Asp-314. 7 disulfides stabilise this stretch: Cys-249-Cys-541, Cys-374-Cys-390, Cys-430-Cys-437, Cys-523-Cys-542, Cys-527-Cys-545, Cys-548-Cys-560, and Cys-563-Cys-576. An L-glutamate-binding site is contributed by Lys-407. N-linked (GlcNAc...) asparagine glycosylation is found at Asn-458 and Asn-486. Residue Asn-572 is glycosylated (N-linked (GlcNAc...) asparagine). A helical transmembrane segment spans residues 591–615 (AVIPVFLAMLGIIATIFVMATFIRY). Over 616 to 627 (NDTPIVRASGRE) the chain is Cytoplasmic. The helical transmembrane segment at 628-648 (LSYVLLTGIFLCYIITFLMIA) threads the bilayer. The Extracellular portion of the chain corresponds to 649 to 654 (KPDVAV). Residues 655–675 (CSFRRVFLGLGMCISYAALLT) traverse the membrane as a helical segment. Residues 676–702 (KTNRIYRIFEQGKKSVTAPRLISPTSQ) lie on the Cytoplasmic side of the membrane. A helical membrane pass occupies residues 703–723 (LAITSSLISVQLLGVFIWFGV). Over 724–753 (DPPNIIIDYDEHKTMNPEQARGVLKCDITD) the chain is Extracellular. A helical transmembrane segment spans residues 754 to 775 (LQIICSLGYSILLMVTCTVYAI). The Cytoplasmic segment spans residues 776-788 (KTRGVPENFNEAK). The chain crosses the membrane as a helical span at residues 789 to 810 (PIGFTMYTTCIVWLAFIPIFFG). The Extracellular segment spans residues 811–825 (TAQSAEKLYIQTTTL). A helical transmembrane segment spans residues 826 to 850 (TISMNLSASVALGMLYMPKVYIIIF). The Cytoplasmic portion of the chain corresponds to 851–922 (HPELNVQKRK…VTWYTIPPTV (72 aa)).

It belongs to the G-protein coupled receptor 3 family. As to quaternary structure, homodimer. Interacts with PICK1.

It is found in the cell membrane. In terms of biological role, G-protein coupled receptor activated by glutamate that regulates axon outgrowth through the MAPK-cAMP-PKA signaling pathway during neuronal development. Ligand binding causes a conformation change that triggers signaling via guanine nucleotide-binding proteins (G proteins) and modulates the activity of downstream effectors, such as adenylate cyclase that it inhibits. The polypeptide is Metabotropic glutamate receptor 7 (GRM7) (Pongo abelii (Sumatran orangutan)).